The primary structure comprises 132 residues: Phosphomevalonate dehydratase small subunit (132 aa).

Catalysis depends on S62, which acts as the Proton acceptor.

It belongs to the AcnX type II small subunit family. Heterodimer composed of a large subunit (PMDh-L) and a small subunit (PMDh-S).

It carries out the reaction (R)-5-phosphomevalonate = (2E)-3-methyl-5-phosphooxypent-2-enoate + H2O. It participates in isoprenoid biosynthesis; isopentenyl diphosphate biosynthesis via mevalonate pathway. Functionally, component of a hydro-lyase that catalyzes the dehydration of mevalonate 5-phosphate (MVA5P) to form trans-anhydromevalonate 5-phosphate (tAHMP). Involved in the archaeal mevalonate (MVA) pathway, which provides fundamental precursors for isoprenoid biosynthesis, such as isopentenyl diphosphate (IPP) and dimethylallyl diphosphate (DMAPP). The chain is Phosphomevalonate dehydratase small subunit from Methanocella arvoryzae (strain DSM 22066 / NBRC 105507 / MRE50).